The following is a 190-amino-acid chain: 3-isopropylmalate dehydratase small subunit (190 aa).

This sequence belongs to the LeuD family. LeuD type 1 subfamily. As to quaternary structure, heterodimer of LeuC and LeuD.

It carries out the reaction (2R,3S)-3-isopropylmalate = (2S)-2-isopropylmalate. The protein operates within amino-acid biosynthesis; L-leucine biosynthesis; L-leucine from 3-methyl-2-oxobutanoate: step 2/4. Its function is as follows. Catalyzes the isomerization between 2-isopropylmalate and 3-isopropylmalate, via the formation of 2-isopropylmaleate. In Staphylococcus aureus (strain JH1), this protein is 3-isopropylmalate dehydratase small subunit.